The sequence spans 683 residues: WD repeat-containing protein 48 homolog (683 aa).

WD repeat units follow at residues 27 to 82 (SNRS…PVQY), 88 to 130 (QHTD…FIDC), 133 to 167 (THKDYVSCLAYAPIVEKAVSASFDHNIFVYDINAN), 176 to 215 (GCKDSIYSLATTPNLSLVLGAGTEKCIRLFDPRTNEKIMK), 218 to 257 (GHTDNVRALVVNDDGTRALSAGSDATIRLWDIGQQRCIAT), 260 to 299 (AHEEGVWTLQVDSSFTTVYSAGKDKMVVKTPLYDFTKSQL), and 302 to 343 (KEEA…QLSI). The segment at 341-364 (LSIGGDEDGPSTSNANHSVSASSS) is disordered. Over residues 351–364 (STSNANHSVSASSS) the composition is skewed to low complexity. Residues 389–428 (PGAPAIKKHAMLSDKRHVLTRDSDGNVALYDVLAARKIKD) form a WD 8 repeat.

The protein belongs to the WD repeat WDR48 family. As to quaternary structure, interacts with usp-46; the interaction increases the catalytic activity of usp-46 in the presence of wdr-20. In terms of tissue distribution, expressed in several head neurons and cells in the tail including the anal depressor cell.

In terms of biological role, together with wdr-20, binds to and stimulates the activity of the deubiquitinating enzyme usp-46, leading to deubiquitination and stabilization of the glr-1 glutamate receptor. In Caenorhabditis elegans, this protein is WD repeat-containing protein 48 homolog (wdr-48).